Consider the following 834-residue polypeptide: DNA gyrase subunit A (834 aa).

The 468-residue stretch at 53-520 folds into the Topo IIA-type catalytic domain; that stretch reads LPDVRDGLKP…NDTEIDEEDL (468 aa). Catalysis depends on Tyr141, which acts as the O-(5'-phospho-DNA)-tyrosine intermediate. Residues 547-553 carry the GyrA-box motif; that stretch reads QGRGGVG.

The protein belongs to the type II topoisomerase GyrA/ParC subunit family. As to quaternary structure, heterotetramer, composed of two GyrA and two GyrB chains. In the heterotetramer, GyrA contains the active site tyrosine that forms a transient covalent intermediate with DNA, while GyrB binds cofactors and catalyzes ATP hydrolysis.

The protein localises to the cytoplasm. It carries out the reaction ATP-dependent breakage, passage and rejoining of double-stranded DNA.. A type II topoisomerase that negatively supercoils closed circular double-stranded (ds) DNA in an ATP-dependent manner to modulate DNA topology and maintain chromosomes in an underwound state. Negative supercoiling favors strand separation, and DNA replication, transcription, recombination and repair, all of which involve strand separation. Also able to catalyze the interconversion of other topological isomers of dsDNA rings, including catenanes and knotted rings. Type II topoisomerases break and join 2 DNA strands simultaneously in an ATP-dependent manner. This chain is DNA gyrase subunit A, found in Brachyspira hyodysenteriae (strain ATCC 49526 / WA1).